Consider the following 116-residue polypeptide: Large ribosomal subunit protein bL17 (116 aa).

Belongs to the bacterial ribosomal protein bL17 family. In terms of assembly, part of the 50S ribosomal subunit. Contacts protein L32.

The chain is Large ribosomal subunit protein bL17 from Trichormus variabilis (strain ATCC 29413 / PCC 7937) (Anabaena variabilis).